The primary structure comprises 212 residues: Uridine kinase (212 aa).

ATP is bound at residue 13–20; sequence GASASGKS.

It belongs to the uridine kinase family.

The protein localises to the cytoplasm. It carries out the reaction uridine + ATP = UMP + ADP + H(+). It catalyses the reaction cytidine + ATP = CMP + ADP + H(+). The protein operates within pyrimidine metabolism; CTP biosynthesis via salvage pathway; CTP from cytidine: step 1/3. It participates in pyrimidine metabolism; UMP biosynthesis via salvage pathway; UMP from uridine: step 1/1. The protein is Uridine kinase of Shewanella amazonensis (strain ATCC BAA-1098 / SB2B).